A 239-amino-acid polypeptide reads, in one-letter code: MIAFLVLPILAAVLQQSSGNVDFDSESPRKPEIQNEIIDLHNSLRRSVNPTASNMLKMEWYPEAAANAERWAFRCILSHSPRDSRVIGGIKCGENIYMSTSPMKWTAIIHEWHGEEKDFVYGQGASPANAVVGHYTQIVWYKSYRSGCAAAYCPSSEYKYFYVCQYCPAGNMQGKTATPYTSGPPCGDCPSACDNGLCTNPCTHEDKFTNCKDLVKQGCNNNYLKTNCPASCSCHNEII.

The first 19 residues, Met1–Gly19, serve as a signal peptide directing secretion. The 128-residue stretch at Asp39–Tyr166 folds into the SCP domain. 8 cysteine pairs are disulfide-bonded: Cys75-Cys153, Cys92-Cys167, Cys148-Cys164, Cys186-Cys193, Cys189-Cys198, Cys202-Cys234, Cys211-Cys228, and Cys219-Cys232. Residues Cys202–Cys234 enclose the ShKT domain.

Belongs to the CRISP family. Expressed by the venom gland.

Its subcellular location is the secreted. Its function is as follows. Blocks contraction of smooth muscle elicited by high potassium-induced depolarization, but does not block caffeine-stimulated contraction. May target voltage-gated calcium channels in smooth muscle. This chain is Cysteine-rich venom protein, found in Vipera berus (Common European adder).